A 160-amino-acid polypeptide reads, in one-letter code: Large ribosomal subunit protein uL22c (160 aa).

This sequence belongs to the universal ribosomal protein uL22 family. As to quaternary structure, part of the 50S ribosomal subunit.

The protein resides in the plastid. The protein localises to the chloroplast. Its function is as follows. This protein binds specifically to 23S rRNA. In terms of biological role, the globular domain of the protein is located near the polypeptide exit tunnel on the outside of the subunit, while an extended beta-hairpin is found that lines the wall of the exit tunnel in the center of the 70S ribosome. This Arabis hirsuta (Hairy rock-cress) protein is Large ribosomal subunit protein uL22c (rpl22).